Here is a 289-residue protein sequence, read N- to C-terminus: B- and T-lymphocyte attenuator (289 aa).

The N-terminal stretch at 1–30 is a signal peptide; the sequence is MKTLPAMLGTGKLFWVFFLIPYLDIWNIHG. The region spanning 31–132 is the Ig-like V-type domain; it reads KESCDVQLYI…LIESHSTTLY (102 aa). Topologically, residues 31–157 are extracellular; sequence KESCDVQLYI…MASRPWLLYR (127 aa). Disulfide bonds link C34–C63, C58–C115, and C72–C79. Residues N75, N94, and N110 are each glycosylated (N-linked (GlcNAc...) asparagine). A helical transmembrane segment spans residues 158-178; sequence LLPLGGLPLLITTCFCLFCCL. Residues 179 to 289 are Cytoplasmic-facing; the sequence is RRHQGKQNEL…TEYASICVRS (111 aa).

In terms of assembly, interacts with tyrosine phosphatases PTPN6/SHP-1 and PTPN11/SHP-2. Interacts with TNFRSF14/HVEM (via cysteine-rich domain 1). In terms of processing, phosphorylated on Tyr residues by TNFRSF14 and by antigen receptors cross-linking, both inducing association with PTPN6 and PTPN11. N-glycosylated.

It localises to the cell membrane. In terms of biological role, inhibitory receptor on lymphocytes that negatively regulates antigen receptor signaling via PTPN6/SHP-1 and PTPN11/SHP-2. May interact in cis (on the same cell) or in trans (on other cells) with TNFRSF14. In cis interactions, appears to play an immune regulatory role inhibiting in trans interactions in naive T cells to maintain a resting state. In trans interactions, can predominate during adaptive immune response to provide survival signals to effector T cells. This is B- and T-lymphocyte attenuator from Homo sapiens (Human).